A 606-amino-acid chain; its full sequence is Chaperone protein DnaK (606 aa).

Thr-174 bears the Phosphothreonine; by autocatalysis mark. The tract at residues 578-606 (YTQAGPQGGTNPGGQGGTDGNVNTDYKVY) is disordered. Residues 583–596 (PQGGTNPGGQGGTD) are compositionally biased toward gly residues.

It belongs to the heat shock protein 70 family.

Its function is as follows. Acts as a chaperone. This chain is Chaperone protein DnaK, found in Caldicellulosiruptor saccharolyticus (strain ATCC 43494 / DSM 8903 / Tp8T 6331).